The following is a 256-amino-acid chain: Thiazole synthase (256 aa).

The active-site Schiff-base intermediate with DXP is Lys96. Residues Gly157, 183–184 (AG), and 205–206 (NT) contribute to the 1-deoxy-D-xylulose 5-phosphate site.

This sequence belongs to the ThiG family. As to quaternary structure, homotetramer. Forms heterodimers with either ThiH or ThiS.

The protein localises to the cytoplasm. It catalyses the reaction [ThiS sulfur-carrier protein]-C-terminal-Gly-aminoethanethioate + 2-iminoacetate + 1-deoxy-D-xylulose 5-phosphate = [ThiS sulfur-carrier protein]-C-terminal Gly-Gly + 2-[(2R,5Z)-2-carboxy-4-methylthiazol-5(2H)-ylidene]ethyl phosphate + 2 H2O + H(+). It functions in the pathway cofactor biosynthesis; thiamine diphosphate biosynthesis. Its function is as follows. Catalyzes the rearrangement of 1-deoxy-D-xylulose 5-phosphate (DXP) to produce the thiazole phosphate moiety of thiamine. Sulfur is provided by the thiocarboxylate moiety of the carrier protein ThiS. In vitro, sulfur can be provided by H(2)S. The sequence is that of Thiazole synthase from Bacillus cereus (strain AH187).